The sequence spans 578 residues: Acyl-coenzyme A synthetase ACSM5, mitochondrial (578 aa).

Residues M1–I22 constitute a mitochondrion transit peptide. K96 bears the N6-acetyllysine; alternate mark. K96 carries the post-translational modification N6-succinyllysine; alternate. K151 carries the post-translational modification N6-acetyllysine. ATP is bound at residue T229–K237. K302 carries the post-translational modification N6-acetyllysine; alternate. K302 is modified (N6-succinyllysine; alternate). Position 335 is an N6-acetyllysine (K335). Residues E367–S372, D454, R469, and K565 contribute to the ATP site.

Belongs to the ATP-dependent AMP-binding enzyme family. The cofactor is Mg(2+). Requires Mn(2+) as cofactor.

The protein localises to the mitochondrion matrix. It catalyses the reaction a medium-chain fatty acid + ATP + CoA = a medium-chain fatty acyl-CoA + AMP + diphosphate. In terms of biological role, catalyzes the activation of fatty acids by CoA to produce an acyl-CoA, the first step in fatty acid metabolism. The protein is Acyl-coenzyme A synthetase ACSM5, mitochondrial (Acsm5) of Mus musculus (Mouse).